The chain runs to 1306 residues: Activating transcription factor 7-interacting protein 1 (1306 aa).

Met1 is modified (N-acetylmethionine). The interval 1–23 (MDSVEEPQKKVFKARKTMRASDR) is disordered. Lys33 participates in a covalent cross-link: Glycyl lysine isopeptide (Lys-Gly) (interchain with G-Cter in SUMO2). Phosphoserine occurs at positions 57 and 112. 7 disordered regions span residues 104 to 470 (EDLN…SMET), 496 to 604 (LPVE…SKRR), 689 to 722 (AAKD…NNMT), 765 to 785 (VVSS…PAAP), 871 to 895 (PLPN…NSST), 920 to 1060 (RTSL…GPSQ), and 1152 to 1196 (AGPQ…STSL). 2 stretches are compositionally biased toward polar residues: residues 109–134 (EALS…SPAS) and 143–162 (VSDN…SDNP). Thr124 carries the post-translational modification Phosphothreonine. Composition is skewed to low complexity over residues 185–212 (EEPP…CSEP), 246–261 (EAAS…ASDE), and 284–303 (PSGD…LPRS). The span at 432–441 (QSEKDEHKSP) shows a compositional bias: basic and acidic residues. Phosphoserine is present on residues Ser511, Ser514, Ser516, and Ser533. Polar residues predominate over residues 513–523 (GSPSKQESSEN). Basic and acidic residues-rich tracts occupy residues 557-566 (EGEKSEKDGK), 592-601 (KSEDMDSVES), and 689-699 (AAKDDLKKRQE). The short motif at 587-605 (RRKRSKSEDMDSVESKRRR) is the Nuclear localization signal element. Residue Lys592 forms a Glycyl lysine isopeptide (Lys-Gly) (interchain with G-Cter in SUMO2) linkage. Ser593 is subject to Phosphoserine. Residues 596–851 (MDSVESKRRR…NQPSGNVEFI (256 aa)) are interaction with SETDB1. Residues 666–696 (NKRHKAVLTELQAKIARLTKRFGAAKDDLKK) are a coiled coil. Phosphoserine occurs at positions 700 and 707. Residues 713 to 722 (NDTNSNNNMT) are compositionally biased toward polar residues. Residues 871-884 (PLPNPTKPNIPSVP) show a composition bias toward pro residues. Ser933 bears the Phosphoserine mark. Glycyl lysine isopeptide (Lys-Gly) (interchain with G-Cter in SUMO2) cross-links involve residues Lys944 and Lys974. The span at 948–981 (STFSPPSSAEQNSSATPRIVTENQTNKTVDSSIN) shows a compositional bias: polar residues. The segment covering 987–1000 (STSQSGKASSSDSS) has biased composition (low complexity). An interaction with SUMO region spans residues 1001-1011 (GVIDLTMDDEE). The segment covering 1022–1040 (SPPSSSTVSTSQPMSRPLQ) has biased composition (low complexity). The region spanning 1054–1143 (PTSGPSQATI…RVPQTTTYVV (90 aa)) is the Fibronectin type-III 1 domain. Residues 1170-1187 (PRPLHPAPLPEAPQPQRL) are compositionally biased toward pro residues. Residues 1190 to 1306 (EAASTSLPQK…TDVISSSQNS (117 aa)) are interaction with MBD1. A Fibronectin type-III 2 domain is found at 1196–1302 (LPQKPHLKLA…DPQSTDVISS (107 aa)).

This sequence belongs to the MCAF family. Interacts with MBD1; the interaction is enhanced when MBD1 is sumoylated. Interacts with SETDB1; the interaction protects SETDB1 from proteasomal degradation and is required to stimulate histone methyltransferase activity and facilitate the conversion of dimethylated to trimethylated H3 'Lys-9'. Interacts with SUMO ubiquitin-like proteins (SUMO1, SUNO2 and SUMO3), with a preference for SUMO2 and SUMO3. Interacts with SP1, ATF7 and ZHX1. Interacts with the general transcription machinery, including ERCC2, ERCC3, GTF2E1, GTF2E2 and POLR2A. As to expression, ubiquitously expressed at all stages studied.

The protein resides in the nucleus. Functionally, recruiter that couples transcriptional factors to general transcription apparatus and thereby modulates transcription regulation and chromatin formation. Can both act as an activator or a repressor depending on the context. Required for HUSH-mediated heterochromatin formation and gene silencing. Mediates MBD1-dependent transcriptional repression, probably by recruiting complexes containing SETDB1. Stabilizes SETDB1, is required to stimulate histone methyltransferase activity of SETDB1 and facilitates the conversion of dimethylated to trimethylated H3 'Lys-9' (H3K9me3). The complex formed with MBD1 and SETDB1 represses transcription and couples DNA methylation and histone H3 'Lys-9' trimethylation (H3K9me3). Facilitates telomerase TERT and TERC gene expression by SP1 in cancer cells. This is Activating transcription factor 7-interacting protein 1 (Atf7ip) from Mus musculus (Mouse).